A 288-amino-acid polypeptide reads, in one-letter code: MFEKLKKKFAEIFHRKKIDPDEVADEIPLKLVEADVSLEAAEDLASLVRNKLKEDTTLDPNEVLSSSILEMMPEYKFDVLNVNKKPFVVLFLGINGTGKTTTIGKFAHYLKRNGKSVVIAAADTFRAGAIEQISLIGREAGTEVIRHDRGSDPSSVAFDAIEHARARNIDYVLIDTAGRMNTNKNLLDEMKKIKRVSKPDLTLLVIDAVSGQDSVNQARMFEENVGYDGVIVTKLDTDARGGSILSIYHDLKKPVLFVCTGQGLDDIMPFDRNWYVRKLIPEPENETA.

GTP-binding positions include 93–100 (GINGTGKT), 175–179 (DTAGR), and 233–236 (TKLD).

Belongs to the GTP-binding SRP family. FtsY subfamily. As to quaternary structure, part of the signal recognition particle protein translocation system, which is composed of SRP and FtsY.

Its subcellular location is the cell membrane. The protein localises to the cytoplasm. The enzyme catalyses GTP + H2O = GDP + phosphate + H(+). Functionally, involved in targeting and insertion of nascent membrane proteins into the cytoplasmic membrane. Acts as a receptor for the complex formed by the signal recognition particle (SRP) and the ribosome-nascent chain (RNC). This Thermoplasma acidophilum (strain ATCC 25905 / DSM 1728 / JCM 9062 / NBRC 15155 / AMRC-C165) protein is Signal recognition particle receptor FtsY.